Consider the following 138-residue polypeptide: Ribosome-binding factor A (138 aa).

Belongs to the RbfA family. As to quaternary structure, monomer. Binds 30S ribosomal subunits, but not 50S ribosomal subunits or 70S ribosomes.

It is found in the cytoplasm. Functionally, one of several proteins that assist in the late maturation steps of the functional core of the 30S ribosomal subunit. Associates with free 30S ribosomal subunits (but not with 30S subunits that are part of 70S ribosomes or polysomes). Required for efficient processing of 16S rRNA. May interact with the 5'-terminal helix region of 16S rRNA. The polypeptide is Ribosome-binding factor A (Bradyrhizobium sp. (strain BTAi1 / ATCC BAA-1182)).